We begin with the raw amino-acid sequence, 187 residues long: Putative gamma-glutamylcyclotransferase At3g02910 (187 aa).

17 to 20 is a binding site for substrate; the sequence is YGTL. Glu-92 acts as the Proton acceptor in catalysis.

It belongs to the gamma-glutamylcyclotransferase family.

Putative gamma-glutamylcyclotransferase. This is Putative gamma-glutamylcyclotransferase At3g02910 from Arabidopsis thaliana (Mouse-ear cress).